The following is a 361-amino-acid chain: Uroporphyrinogen decarboxylase (361 aa).

Substrate is bound by residues 44–48, Asp-93, Tyr-168, Ser-223, and His-337; that span reads RQAGR.

It belongs to the uroporphyrinogen decarboxylase family. Homodimer.

The protein resides in the cytoplasm. The catalysed reaction is uroporphyrinogen III + 4 H(+) = coproporphyrinogen III + 4 CO2. It participates in porphyrin-containing compound metabolism; protoporphyrin-IX biosynthesis; coproporphyrinogen-III from 5-aminolevulinate: step 4/4. Its function is as follows. Catalyzes the decarboxylation of four acetate groups of uroporphyrinogen-III to yield coproporphyrinogen-III. The polypeptide is Uroporphyrinogen decarboxylase (Thermobifida fusca (strain YX)).